The chain runs to 124 residues: Fluoride-specific ion channel FluC (124 aa).

The next 4 membrane-spanning stretches (helical) occupy residues 6 to 26 (FAVA…ATWV), 34 to 54 (FYLA…YLYA), 69 to 89 (ALII…LDAL), and 101 to 121 (FAYV…GLAL). Residues glycine 76 and threonine 79 each contribute to the Na(+) site.

This sequence belongs to the fluoride channel Fluc/FEX (TC 1.A.43) family.

It localises to the cell inner membrane. The enzyme catalyses fluoride(in) = fluoride(out). With respect to regulation, na(+) is not transported, but it plays an essential structural role and its presence is essential for fluoride channel function. In terms of biological role, fluoride-specific ion channel. Important for reducing fluoride concentration in the cell, thus reducing its toxicity. In Stutzerimonas stutzeri (strain A1501) (Pseudomonas stutzeri), this protein is Fluoride-specific ion channel FluC.